A 365-amino-acid polypeptide reads, in one-letter code: Spermidine/putrescine import ATP-binding protein PotA (365 aa).

Residues 7 to 237 (LTLADITKRF…PNNLFVASFI (231 aa)) form the ABC transporter domain. 39-46 (GPSGCGKT) provides a ligand contact to ATP.

This sequence belongs to the ABC transporter superfamily. Spermidine/putrescine importer (TC 3.A.1.11.1) family. The complex is composed of two ATP-binding proteins (PotA), two transmembrane proteins (PotB and PotC) and a solute-binding protein (PotD).

Its subcellular location is the cell inner membrane. The enzyme catalyses ATP + H2O + polyamine-[polyamine-binding protein]Side 1 = ADP + phosphate + polyamineSide 2 + [polyamine-binding protein]Side 1.. Part of the ABC transporter complex PotABCD involved in spermidine/putrescine import. Responsible for energy coupling to the transport system. The polypeptide is Spermidine/putrescine import ATP-binding protein PotA (Hahella chejuensis (strain KCTC 2396)).